A 1507-amino-acid polypeptide reads, in one-letter code: Lhr helicase/ probable uracil glycosylase (1507 aa).

A lhr-Core region spans residues 1-856; the sequence is MTTNGADPLG…ASLLFGYVGA (856 aa). Residues Phe24, Gln31, Lys54, and Thr55 each coordinate ATP. The region spanning 35-226 is the Helicase ATP-binding domain; the sequence is WSAISEGNNT…FLSGQAPTTI (192 aa). Residues Arg122, Arg131, Thr145, Ser148, and Met152 each coordinate ssDNA. 2 residues coordinate ATP: Asp170 and Glu171. The short motif at 170 to 173 is the DEAH box element; the sequence is DEVH. SsDNA contacts are provided by Ser253, Trp255, and Arg279. One can recognise a Helicase C-terminal domain in the interval 257–451; the sequence is DVEERIVDLV…VLAQHTVAVA (195 aa). The ATP site is built by Ile377, Arg394, and His397. The ssDNA site is built by Lys410, Gln518, Arg519, Ile528, Trp597, Asp600, and Arg777. A WH domain region spans residues 436 to 529; the sequence is PANPLDVLAQ…LAVTSGGAIP (94 aa). The tract at residues 530 to 856 is domain 4; the sequence is DRGMFTVYLA…ASLLFGYVGA (327 aa). The tract at residues 857-1507 is CTD; the sequence is FMYEGDSPLA…SRTPRGLRLR (651 aa).

It belongs to the Lhr helicase family. In terms of assembly, monomer. Homooligomerizes, possibly a homotetramer. Ca(2+) is required as a cofactor.

The enzyme catalyses Couples ATP hydrolysis with the unwinding of duplex DNA by translocating in the 3'-5' direction.. The catalysed reaction is ATP + H2O = ADP + phosphate + H(+). It catalyses the reaction Hydrolyzes single-stranded DNA or mismatched double-stranded DNA and polynucleotides, releasing free uracil.. A 3'-5' helicase involved in repair of at least 3 types of DNA cross-links, mitomycin C (MMC), cisplatin, and psoralen-UVA. Translocates 3'-to-5' on single-stranded (ss)DNA, unwinding any encountered duplex nucleic acid. A 3'-ssDNA loading strand of at least 15 nucleotides is required for helicase activity. An RNA:DNA hybrid with a 3'-ssDNA loading strand is an 8-fold better helicase substrate than 3'-tailed double-stranded (ds)DNA; substrates where the helicase loads on a 3'-ssRNA tail (DNA:RNA and RNA:RNA) are not unwound. Only (d)ATP is hydrolyzed by the protein, which has no ATPase activity in the absence of ssDNA or ssRNA. Arg-279 and Trp-597 are needed to couple ATP hydrolysis to mechanical work; a salt bridge between Arg-280 and Glu-550 closes a clamp around the ssDNA that is not large enough for dsDNA, while Ile-528 wedges between bases of the loading strand. Functionally, excises uracil residues from ssDNA. Uracil residues in DNA can arise as a result of misincorporation of dUMP residues by DNA polymerase or due to deamination of cytosine. This chain is Lhr helicase/ probable uracil glycosylase, found in Mycolicibacterium smegmatis (strain ATCC 700084 / mc(2)155) (Mycobacterium smegmatis).